Consider the following 384-residue polypeptide: 8-amino-7-oxononanoate synthase (384 aa).

Position 21 (Arg-21) interacts with substrate. Pyridoxal 5'-phosphate is bound at residue 108-109 (GF). Residue His-133 participates in substrate binding. 3 residues coordinate pyridoxal 5'-phosphate: Ser-179, His-207, and Thr-233. Lys-236 is modified (N6-(pyridoxal phosphate)lysine). Thr-352 serves as a coordination point for substrate.

Belongs to the class-II pyridoxal-phosphate-dependent aminotransferase family. BioF subfamily. Homodimer. It depends on pyridoxal 5'-phosphate as a cofactor.

It catalyses the reaction 6-carboxyhexanoyl-[ACP] + L-alanine + H(+) = (8S)-8-amino-7-oxononanoate + holo-[ACP] + CO2. It functions in the pathway cofactor biosynthesis; biotin biosynthesis. Its function is as follows. Catalyzes the decarboxylative condensation of pimeloyl-[acyl-carrier protein] and L-alanine to produce 8-amino-7-oxononanoate (AON), [acyl-carrier protein], and carbon dioxide. The chain is 8-amino-7-oxononanoate synthase from Enterobacter sp. (strain 638).